A 476-amino-acid chain; its full sequence is TOM1-like protein 1 (476 aa).

Residues 22–154 (ATFAGVQTED…DLVKKGVQFP (133 aa)) enclose the VHS domain. The tract at residues 155–179 (PSEAEAETARQETAQISSNPPTSVP) is disordered. The segment covering 170–179 (ISSNPPTSVP) has biased composition (polar residues). Serine 171 carries the phosphoserine modification. In terms of domain architecture, GAT spans 200–288 (EQIGKLHSEL…AILGYERFTR (89 aa)). Residues 298–314 (KNQKEATNTTSEPSAPS) show a composition bias toward polar residues. Residues 298–327 (KNQKEATNTTSEPSAPSQDLLDLSPSPRMP) form a disordered region. 3 positions are modified to phosphoserine: serine 314, serine 321, and serine 323. An interaction with GRB2 region spans residues 392 to 395 (YDNF). The SH3-binding motif lies at 421 to 425 (LPPLP). An interaction with PIK3R1 region spans residues 442–445 (YEVM). The residue at position 460 (tyrosine 460) is a Phosphotyrosine. The SH2-binding motif lies at 460 to 463 (YEEI).

The protein belongs to the TOM1 family. Interacts with FYN, GRB2 and PIK3R1 when phosphorylated. Interacts with LYN. Phosphorylated on tyrosines by FYN and LYN.

The protein localises to the golgi apparatus. Its subcellular location is the golgi stack. The protein resides in the endosome membrane. It localises to the cytoplasm. It is found in the membrane. Functionally, probable adapter protein involved in signaling pathways. Interacts with the SH2 and SH3 domains of various signaling proteins when it is phosphorylated. May promote FYN activation, possibly by disrupting intramolecular SH3-dependent interactions. The polypeptide is TOM1-like protein 1 (TOM1L1) (Homo sapiens (Human)).